The primary structure comprises 264 residues: Phosphonoacetaldehyde hydrolase (264 aa).

Residue Asp-9 is the Nucleophile of the active site. The Mg(2+) site is built by Asp-9 and Ala-11. Lys-50 functions as the Schiff-base intermediate with substrate in the catalytic mechanism. Position 183 (Asp-183) interacts with Mg(2+).

Belongs to the HAD-like hydrolase superfamily. PhnX family. Homodimer. Requires Mg(2+) as cofactor.

The enzyme catalyses phosphonoacetaldehyde + H2O = acetaldehyde + phosphate + H(+). Its function is as follows. Involved in phosphonate degradation. This is Phosphonoacetaldehyde hydrolase (phnX) from Bacillus cereus.